The chain runs to 193 residues: dCTP deaminase (193 aa).

DCTP is bound by residues 110 to 115, D128, 136 to 138, Y171, K178, and Q182; these read RSSLAR and VLE. E138 serves as the catalytic Proton donor/acceptor.

This sequence belongs to the dCTP deaminase family. In terms of assembly, homotrimer.

The enzyme catalyses dCTP + H2O + H(+) = dUTP + NH4(+). The protein operates within pyrimidine metabolism; dUMP biosynthesis; dUMP from dCTP (dUTP route): step 1/2. Functionally, catalyzes the deamination of dCTP to dUTP. This Buchnera aphidicola subsp. Acyrthosiphon pisum (strain APS) (Acyrthosiphon pisum symbiotic bacterium) protein is dCTP deaminase.